The sequence spans 98 residues: Cell division topological specificity factor (98 aa).

Belongs to the MinE family.

Functionally, prevents the cell division inhibition by proteins MinC and MinD at internal division sites while permitting inhibition at polar sites. This ensures cell division at the proper site by restricting the formation of a division septum at the midpoint of the long axis of the cell. This chain is Cell division topological specificity factor, found in Nitrosomonas eutropha (strain DSM 101675 / C91 / Nm57).